A 258-amino-acid chain; its full sequence is Hydroxyethylthiazole kinase (258 aa).

Residue Met37 coordinates substrate. Arg112 and Thr158 together coordinate ATP. Residue Ala185 participates in substrate binding.

It belongs to the Thz kinase family. The cofactor is Mg(2+).

The enzyme catalyses 5-(2-hydroxyethyl)-4-methylthiazole + ATP = 4-methyl-5-(2-phosphooxyethyl)-thiazole + ADP + H(+). It functions in the pathway cofactor biosynthesis; thiamine diphosphate biosynthesis; 4-methyl-5-(2-phosphoethyl)-thiazole from 5-(2-hydroxyethyl)-4-methylthiazole: step 1/1. In terms of biological role, catalyzes the phosphorylation of the hydroxyl group of 4-methyl-5-beta-hydroxyethylthiazole (THZ). The protein is Hydroxyethylthiazole kinase of Rhizobium etli (strain CIAT 652).